A 472-amino-acid polypeptide reads, in one-letter code: Siroheme synthase (472 aa).

Positions 1 to 207 (MNFLPIFLDI…GKDQAAKAWL (207 aa)) are precorrin-2 dehydrogenase /sirohydrochlorin ferrochelatase. NAD(+)-binding positions include 22–23 (EV) and 43–44 (PR). The residue at position 132 (S132) is a Phosphoserine. The segment at 221-472 (GEVYLVGAGP…QPEGNLPGAE (252 aa)) is uroporphyrinogen-III C-methyltransferase. S-adenosyl-L-methionine is bound at residue P230. The active-site Proton acceptor is D253. K275 functions as the Proton donor in the catalytic mechanism. Residues 306–308 (GGD), I311, 336–337 (TA), M388, and G417 each bind S-adenosyl-L-methionine.

In the N-terminal section; belongs to the precorrin-2 dehydrogenase / sirohydrochlorin ferrochelatase family. It in the C-terminal section; belongs to the precorrin methyltransferase family.

It catalyses the reaction uroporphyrinogen III + 2 S-adenosyl-L-methionine = precorrin-2 + 2 S-adenosyl-L-homocysteine + H(+). The enzyme catalyses precorrin-2 + NAD(+) = sirohydrochlorin + NADH + 2 H(+). It carries out the reaction siroheme + 2 H(+) = sirohydrochlorin + Fe(2+). It participates in cofactor biosynthesis; adenosylcobalamin biosynthesis; precorrin-2 from uroporphyrinogen III: step 1/1. It functions in the pathway cofactor biosynthesis; adenosylcobalamin biosynthesis; sirohydrochlorin from precorrin-2: step 1/1. Its pathway is porphyrin-containing compound metabolism; siroheme biosynthesis; precorrin-2 from uroporphyrinogen III: step 1/1. The protein operates within porphyrin-containing compound metabolism; siroheme biosynthesis; siroheme from sirohydrochlorin: step 1/1. It participates in porphyrin-containing compound metabolism; siroheme biosynthesis; sirohydrochlorin from precorrin-2: step 1/1. Multifunctional enzyme that catalyzes the SAM-dependent methylations of uroporphyrinogen III at position C-2 and C-7 to form precorrin-2 via precorrin-1. Then it catalyzes the NAD-dependent ring dehydrogenation of precorrin-2 to yield sirohydrochlorin. Finally, it catalyzes the ferrochelation of sirohydrochlorin to yield siroheme. The sequence is that of Siroheme synthase from Nitrosospira multiformis (strain ATCC 25196 / NCIMB 11849 / C 71).